The following is a 140-amino-acid chain: MAIERTFSMIKPDATKRNLTGAITKMLEDAGLRVVASKRVWMSRREAEGFYAVHKDRPFFGELVEGMTSGPTVVQVLEGEGAILKNREIMGATNPANADEGTIRKVHALSIGENSVHGSDAPETAAQEIKYWFSDTEIVG.

ATP is bound by residues lysine 11, phenylalanine 59, arginine 87, threonine 93, arginine 104, and asparagine 114. The active-site Pros-phosphohistidine intermediate is histidine 117.

The protein belongs to the NDK family. In terms of assembly, homotetramer. Mg(2+) serves as cofactor.

It is found in the cytoplasm. The catalysed reaction is a 2'-deoxyribonucleoside 5'-diphosphate + ATP = a 2'-deoxyribonucleoside 5'-triphosphate + ADP. It carries out the reaction a ribonucleoside 5'-diphosphate + ATP = a ribonucleoside 5'-triphosphate + ADP. Its function is as follows. Major role in the synthesis of nucleoside triphosphates other than ATP. The ATP gamma phosphate is transferred to the NDP beta phosphate via a ping-pong mechanism, using a phosphorylated active-site intermediate. The polypeptide is Nucleoside diphosphate kinase (Rhizobium etli (strain CIAT 652)).